A 180-amino-acid polypeptide reads, in one-letter code: MELKSTLLDDKAIKRTLIRISHEIIERNKGIEDIVLIGIKRRGYPLAQRIAEHIEGIEGSKVDVGYVDITLYRDDLTIVEKDPTVKSIDIETTIKDKKVILVDDVLYTCRTVRAAIDAVMDLDRPEGIQLAVLIDRGHKELPIRADYVGKNIPTSKNEVIKVMLNEIDGEDSVKIYDSIN.

A PRPP-binding motif is present at residues 99–111 (VILVDDVLYTCRT).

It belongs to the purine/pyrimidine phosphoribosyltransferase family. PyrR subfamily. Homodimer and homohexamer; in equilibrium.

It carries out the reaction UMP + diphosphate = 5-phospho-alpha-D-ribose 1-diphosphate + uracil. Its function is as follows. Regulates transcriptional attenuation of the pyrimidine nucleotide (pyr) operon by binding in a uridine-dependent manner to specific sites on pyr mRNA. This disrupts an antiterminator hairpin in the RNA and favors formation of a downstream transcription terminator, leading to a reduced expression of downstream genes. Functionally, also displays a weak uracil phosphoribosyltransferase activity which is not physiologically significant. The chain is Bifunctional protein PyrR from Clostridium botulinum (strain Eklund 17B / Type B).